Reading from the N-terminus, the 148-residue chain is Deoxyuridine 5'-triphosphate nucleotidohydrolase (148 aa).

Substrate-binding positions include 68–70 (RSG), Asn-81, 85–87 (TVD), and Lys-95.

This sequence belongs to the dUTPase family. Mg(2+) serves as cofactor.

The enzyme catalyses dUTP + H2O = dUMP + diphosphate + H(+). It participates in pyrimidine metabolism; dUMP biosynthesis; dUMP from dCTP (dUTP route): step 2/2. In terms of biological role, this enzyme is involved in nucleotide metabolism: it produces dUMP, the immediate precursor of thymidine nucleotides and it decreases the intracellular concentration of dUTP so that uracil cannot be incorporated into DNA. This chain is Deoxyuridine 5'-triphosphate nucleotidohydrolase, found in Caldanaerobacter subterraneus subsp. tengcongensis (strain DSM 15242 / JCM 11007 / NBRC 100824 / MB4) (Thermoanaerobacter tengcongensis).